The chain runs to 476 residues: Proton-coupled amino acid transporter 1 (476 aa).

Over residues 1–15 (MSTQRLRNEDYHDYS) the composition is skewed to basic and acidic residues. The disordered stretch occupies residues 1 to 32 (MSTQRLRNEDYHDYSSTDVSPEESPSEGLNNL). The Cytoplasmic portion of the chain corresponds to 1-51 (MSTQRLRNEDYHDYSSTDVSPEESPSEGLNNLSSPGSYQRFGQSNSTTWFQ). A helical membrane pass occupies residues 52–72 (TLIHLLKGNIGTGLLGLPLAV). At 73 to 78 (KNAGIV) the chain is on the extracellular side. Residues 79-99 (MGPISLLIIGIVAVHCMGILV) form a helical membrane-spanning segment. Residues 100–141 (KCAHHFCRRLNKSFVDYGDTVMYGLESSPCSWLRNHAHWGRR) lie on the Cytoplasmic side of the membrane. Residues 142–162 (VVDFFLIVTQLGFCCVYFVFL) traverse the membrane as a helical segment. Over 163-190 (ADNFKQVIEAANGTTNNCHNNETVILTP) the chain is Extracellular. 2 N-linked (GlcNAc...) asparagine glycosylation sites follow: Asn-174 and Asn-183. Residues Cys-180 and Cys-329 are joined by a disulfide bond. A helical membrane pass occupies residues 191 to 211 (TMDSRLYMLSFLPFLVLLVFI). Over 212 to 215 (RNLR) the chain is Cytoplasmic. Residues 216-236 (ALSIFSLLANITMLVSLVMIY) form a helical membrane-spanning segment. The Extracellular segment spans residues 237–257 (QFIVQRIPDPSHLPLVAPWKT). The chain crosses the membrane as a helical span at residues 258–278 (YPLFFGTAIFSFEGIGMVLPL). The Cytoplasmic portion of the chain corresponds to 279–289 (ENKMKDPRKFP). A helical transmembrane segment spans residues 290 to 310 (LILYLGMVIVTILYISLGCLG). Residues 311-342 (YLQFGANIQGSITLNLPNCWLYQSVKLLYSIG) lie on the Extracellular side of the membrane. Residues 343 to 363 (IFFTYALQFYVPAEIIIPFFV) form a helical membrane-spanning segment. Residues 364 to 372 (SRAPEHCEL) are Cytoplasmic-facing. Residues 373–393 (VVDLFVRTVLVCLTCILAILI) form a helical membrane-spanning segment. The Extracellular portion of the chain corresponds to 394 to 397 (PRLD). Residues 398–418 (LVISLVGSVSSSALALIIPPL) traverse the membrane as a helical segment. Residues 419 to 439 (LEVTTFYSEGMSPLTIFKDAL) lie on the Cytoplasmic side of the membrane. Residues 440–460 (ISILGFVGFVVGTYEALYELI) form a helical membrane-spanning segment. Residues 461-476 (QPSNAPIFINSTCAFI) are Extracellular-facing. Asn-470 carries N-linked (GlcNAc...) asparagine glycosylation.

The protein belongs to the amino acid/polyamine transporter 2 family.

Its subcellular location is the cell membrane. It localises to the apical cell membrane. The protein localises to the lysosome membrane. It carries out the reaction glycine(in) + H(+)(in) = glycine(out) + H(+)(out). The enzyme catalyses L-alanine(in) + H(+)(in) = L-alanine(out) + H(+)(out). The catalysed reaction is D-alanine(in) + H(+)(in) = D-alanine(out) + H(+)(out). It catalyses the reaction L-proline(out) + H(+)(out) = L-proline(in) + H(+)(in). It carries out the reaction D-proline(out) + H(+)(out) = D-proline(in) + H(+)(in). The enzyme catalyses D-serine(out) + H(+)(out) = D-serine(in) + H(+)(in). The catalysed reaction is L-serine(in) + H(+)(in) = L-serine(out) + H(+)(out). It catalyses the reaction 4-aminobutanoate(in) + H(+)(in) = 4-aminobutanoate(out) + H(+)(out). It carries out the reaction beta-alanine(in) + H(+)(in) = beta-alanine(out) + H(+)(out). Functionally, electrogenic proton/amino acid symporter with selectivity for small apolar L-amino acids, their D-enantiomers and selected amino acid derivatives such as 4-aminobutanoate/GABA. May be involved in the efflux from the lysosomal compartment of neutral amino acids resulting from proteolysis. May play a role in specifying sites for exocytosis in neurons. The protein is Proton-coupled amino acid transporter 1 of Homo sapiens (Human).